A 315-amino-acid chain; its full sequence is Protoheme IX farnesyltransferase 1 (315 aa).

Transmembrane regions (helical) follow at residues 25–45 (PGII…AAKG), 49–69 (LALM…GCAV), 87–107 (RVTV…LALG), 120–139 (ALAL…VYSL), 145–165 (SVYG…VGYC), 176–196 (AILL…IAIF), 220–240 (LHIV…PLAG), 242–262 (TGIA…AMAL), and 280–300 (GFSI…SQVI).

The protein belongs to the UbiA prenyltransferase family. Protoheme IX farnesyltransferase subfamily.

The protein resides in the cell inner membrane. The enzyme catalyses heme b + (2E,6E)-farnesyl diphosphate + H2O = Fe(II)-heme o + diphosphate. The protein operates within porphyrin-containing compound metabolism; heme O biosynthesis; heme O from protoheme: step 1/1. Functionally, converts heme B (protoheme IX) to heme O by substitution of the vinyl group on carbon 2 of heme B porphyrin ring with a hydroxyethyl farnesyl side group. This Shewanella sp. (strain W3-18-1) protein is Protoheme IX farnesyltransferase 1.